A 225-amino-acid chain; its full sequence is MTRSIIAVLPAAGVGSRMQADKPKQYLTLLGKTLLEHTLDVMLSYPAVSKIILAVSKDDPYISTLSLDPKIQLVEGGTTRAESVLNGLNAIAEKNAWVLVHDAARPCLQHADIDKLLAIEDKQGAILAIPVTDTIKRADNQQCIVKTEDRSQLWQAMTPQFFPVDILRDALSTGIQQGANITDEASAIELAGFRPHLVAGRSDNLKVTRPEDLALAEFYLTRNKL.

Belongs to the IspD/TarI cytidylyltransferase family. IspD subfamily.

The catalysed reaction is 2-C-methyl-D-erythritol 4-phosphate + CTP + H(+) = 4-CDP-2-C-methyl-D-erythritol + diphosphate. Its pathway is isoprenoid biosynthesis; isopentenyl diphosphate biosynthesis via DXP pathway; isopentenyl diphosphate from 1-deoxy-D-xylulose 5-phosphate: step 2/6. Functionally, catalyzes the formation of 4-diphosphocytidyl-2-C-methyl-D-erythritol from CTP and 2-C-methyl-D-erythritol 4-phosphate (MEP). In Haemophilus influenzae (strain 86-028NP), this protein is 2-C-methyl-D-erythritol 4-phosphate cytidylyltransferase.